The primary structure comprises 292 residues: Protease HtpX (292 aa).

Transmembrane regions (helical) follow at residues 5–25 and 34–54; these read IFLF…VMSL and SGLL…SLLL. Zn(2+) is bound at residue H140. E141 is an active-site residue. H144 contacts Zn(2+). Helical transmembrane passes span 155–175 and 193–213; these read LLQG…GGII and IIVF…AMWF. E218 is a binding site for Zn(2+).

It belongs to the peptidase M48B family. It depends on Zn(2+) as a cofactor.

It is found in the cell inner membrane. The sequence is that of Protease HtpX from Xanthomonas axonopodis pv. citri (strain 306).